The chain runs to 245 residues: 1-(5-phosphoribosyl)-5-[(5-phosphoribosylamino)methylideneamino] imidazole-4-carboxamide isomerase (245 aa).

The Proton acceptor role is filled by aspartate 7. The Proton donor role is filled by aspartate 129.

The protein belongs to the HisA/HisF family.

The protein resides in the cytoplasm. The enzyme catalyses 1-(5-phospho-beta-D-ribosyl)-5-[(5-phospho-beta-D-ribosylamino)methylideneamino]imidazole-4-carboxamide = 5-[(5-phospho-1-deoxy-D-ribulos-1-ylimino)methylamino]-1-(5-phospho-beta-D-ribosyl)imidazole-4-carboxamide. It functions in the pathway amino-acid biosynthesis; L-histidine biosynthesis; L-histidine from 5-phospho-alpha-D-ribose 1-diphosphate: step 4/9. The sequence is that of 1-(5-phosphoribosyl)-5-[(5-phosphoribosylamino)methylideneamino] imidazole-4-carboxamide isomerase from Escherichia coli (strain 55989 / EAEC).